The following is a 452-amino-acid chain: Probable 1,4-beta-D-glucan cellobiohydrolase A (452 aa).

The N-terminal stretch at 1-17 is a signal peptide; the sequence is MHQRALLFSALAVAANA. Asparagine 81 is a glycosylation site (N-linked (GlcNAc...) asparagine). Glutamate 226 acts as the Nucleophile in catalysis. The active-site Proton donor is the glutamate 231. Asparagine 284 is a glycosylation site (N-linked (GlcNAc...) asparagine). The interval 406-432 is disordered; the sequence is DPSKPGVARGTCEHGAGDPEKVESQHP. The span at 416–431 shows a compositional bias: basic and acidic residues; the sequence is TCEHGAGDPEKVESQH.

Belongs to the glycosyl hydrolase 7 (cellulase C) family.

It is found in the secreted. The enzyme catalyses Hydrolysis of (1-&gt;4)-beta-D-glucosidic linkages in cellulose and cellotetraose, releasing cellobiose from the non-reducing ends of the chains.. Functionally, the biological conversion of cellulose to glucose generally requires three types of hydrolytic enzymes: (1) Endoglucanases which cut internal beta-1,4-glucosidic bonds; (2) Exocellobiohydrolases that cut the disaccharide cellobiose from the non-reducing end of the cellulose polymer chain; (3) Beta-1,4-glucosidases which hydrolyze the cellobiose and other short cello-oligosaccharides to glucose. The protein is Probable 1,4-beta-D-glucan cellobiohydrolase A (cbhA) of Neosartorya fischeri (strain ATCC 1020 / DSM 3700 / CBS 544.65 / FGSC A1164 / JCM 1740 / NRRL 181 / WB 181) (Aspergillus fischerianus).